The following is a 126-amino-acid chain: MSQALRPQAIKTSTTGSSLADILERVLDKGIVIAGDITVSVGSVELLSIRIRLLVASVDKAKEIGINWWESDPYLSSRTQELLASNQQLLERVNLLERELAATKATGVIKKGVLGTPFFIWFYDLV.

Belongs to the gas vesicle GvpA family. Interacts with GvpA.

The protein resides in the gas vesicle. In terms of biological role, a minor component of the gas vesicle, might be involved in nucleating gas vesicle formation. Gas vesicles (GV) are hollow, gas filled proteinaceous nanostructures. During planktonic growth they allow positioning of the organism at a favorable depth for light or nutrient acquisition. In Pseudanabaena galeata (strain PCC 6901), this protein is Gas vesicle protein J.